A 155-amino-acid chain; its full sequence is Ribosome-binding factor A (155 aa).

It belongs to the RbfA family. Monomer. Binds 30S ribosomal subunits, but not 50S ribosomal subunits or 70S ribosomes.

Its subcellular location is the cytoplasm. Its function is as follows. One of several proteins that assist in the late maturation steps of the functional core of the 30S ribosomal subunit. Associates with free 30S ribosomal subunits (but not with 30S subunits that are part of 70S ribosomes or polysomes). Required for efficient processing of 16S rRNA. May interact with the 5'-terminal helix region of 16S rRNA. The protein is Ribosome-binding factor A of Methylocella silvestris (strain DSM 15510 / CIP 108128 / LMG 27833 / NCIMB 13906 / BL2).